A 137-amino-acid polypeptide reads, in one-letter code: MLQPKRTKFRKTHKGRNRGLANTGNEVSFGTFGLKATSRGQLTARQIEAARRAMTRHVKRQGKIWIRVFPDKPITEKPLEVRMGKGKGNVEYWVCPIQPGKVLYEMDGVPEALAREAFALAAAKLSVQTTFVIKTVM.

Positions 1-17 (MLQPKRTKFRKTHKGRN) are enriched in basic residues. Positions 1-24 (MLQPKRTKFRKTHKGRNRGLANTG) are disordered.

Belongs to the universal ribosomal protein uL16 family. In terms of assembly, part of the 50S ribosomal subunit.

Its function is as follows. Binds 23S rRNA and is also seen to make contacts with the A and possibly P site tRNAs. This chain is Large ribosomal subunit protein uL16, found in Aeromonas salmonicida (strain A449).